The sequence spans 586 residues: Tetratricopeptide repeat protein 39B (586 aa).

3 TPR repeats span residues 292–325 (SIILFYAARIDILKGRFEQAQETFQKCIVSQQEW), 483–516 (CLVQLLKGVCLKHLGRLLQAELCFNQVIQSEKRV), and 524–557 (PFTFYELGLLYKEQGDRDKAIRYIETAKGNYKDY).

It belongs to the TTC39 family.

Functionally, may be involved in lipid metabolism. This chain is Tetratricopeptide repeat protein 39B (ttc39b), found in Xenopus laevis (African clawed frog).